The primary structure comprises 668 residues: tRNA 5-methylaminomethyl-2-thiouridine biosynthesis bifunctional protein MnmC (668 aa).

The tRNA (mnm(5)s(2)U34)-methyltransferase stretch occupies residues 1-245 (MKHYAIQPAN…KREMLCGVME (245 aa)). Residues 270–668 (IGGGIASALL…LLKGKAVKAG (399 aa)) are FAD-dependent cmnm(5)s(2)U34 oxidoreductase.

In the N-terminal section; belongs to the methyltransferase superfamily. tRNA (mnm(5)s(2)U34)-methyltransferase family. This sequence in the C-terminal section; belongs to the DAO family. The cofactor is FAD.

It localises to the cytoplasm. The enzyme catalyses 5-aminomethyl-2-thiouridine(34) in tRNA + S-adenosyl-L-methionine = 5-methylaminomethyl-2-thiouridine(34) in tRNA + S-adenosyl-L-homocysteine + H(+). In terms of biological role, catalyzes the last two steps in the biosynthesis of 5-methylaminomethyl-2-thiouridine (mnm(5)s(2)U) at the wobble position (U34) in tRNA. Catalyzes the FAD-dependent demodification of cmnm(5)s(2)U34 to nm(5)s(2)U34, followed by the transfer of a methyl group from S-adenosyl-L-methionine to nm(5)s(2)U34, to form mnm(5)s(2)U34. This chain is tRNA 5-methylaminomethyl-2-thiouridine biosynthesis bifunctional protein MnmC, found in Escherichia coli (strain SMS-3-5 / SECEC).